The chain runs to 240 residues: Small ribosomal subunit protein eS4 (240 aa).

In terms of domain architecture, S4 RNA-binding spans 37 to 99; sequence VPLVVLLRDV…RGEFFRVFPD (63 aa).

Belongs to the eukaryotic ribosomal protein eS4 family.

The protein is Small ribosomal subunit protein eS4 of Halorubrum lacusprofundi (strain ATCC 49239 / DSM 5036 / JCM 8891 / ACAM 34).